The chain runs to 511 residues: Cytochrome P450 monooxygenase roqR (511 aa).

The signal sequence occupies residues M1–A23. Residues N364, N373, and N383 are each glycosylated (N-linked (GlcNAc...) asparagine). Heme is bound at residue C455.

It belongs to the cytochrome P450 family. It depends on heme as a cofactor.

It participates in alkaloid biosynthesis. Cytochrome P450 monooxygenase; part of the gene cluster that mediates the biosynthesis of the mycotoxins roquefortine C and meleagrin. The first stage is catalyzed by the dipeptide synthase roqA which condenses histidine and tryptophan to produce histidyltryptophanyldiketopiperazine (HTD). HTD is then converted to roquefortine C through two possible pathways. In the first pathway, prenyltransferase roqD transforms HTD to the intermediate roquefortine D, which is in turn converted to roquefortine C by the cytochrome P450 monooxygenase roqR. In the second pathway, HTD is first converted to the intermediate dehydrohistidyltryptophanyldi-ketopiperazine (DHTD) by roqR which is then prenylated by roqD to form roquefortine C. Roquefortine C can be further transformed to meleagrin via three more reactions including oxydation to glandicolin A by roqM, which is further reduced to glandicoline B by roqO. Finally, glandicoline B is converted to meleagrin by the glandicoline B O-methyltransferase roqN. More studies identified further branching and additional metabolites produced by the roquefortine/meleagrin cluster, including roquefortine F, roquefortine L, roquefortine M, roquefortine N and neoxaline. In Penicillium rubens (strain ATCC 28089 / DSM 1075 / NRRL 1951 / Wisconsin 54-1255) (Penicillium chrysogenum), this protein is Cytochrome P450 monooxygenase roqR.